Here is a 404-residue protein sequence, read N- to C-terminus: MYKNQLQELAQRSCFSLPSYVCTREGPDHAPRFKATVTFNGETFDGPSNCTTLRQAEHAAAEVALARLSLRGPSSSLTARVLDETGVYKNLLQETAHRAGLKLPVYTTVRSGPGHSPVFSSTVELAGMSFAGDPAKTKKHAEKNAAMAAWSSLKQSNIRTTVSPLVFDLVWIVCHGGDVFVVVWCSAGGAQGARRRRRRGAGACGRRQGARRAEAAGRLRRRRWRREGGGGVSTEEASRRRVLFVRHVAVQTSMGASVAAAAGGRTQDTASPAPAAAAASGGVRLPSRRRRAGARAEEGRRAGAHAARRHAARQGGRRNAAADAVLLRAVLPPRRRRRPDEALRRRRRVPRAAGGERPFSDPGLRRATVAAAAAAQGGRSSDLIQEGVVVVKTSIQSIAQPAPI.

DRBM domains lie at 1-70 (MYKN…RLSL) and 87-155 (VYKN…SLKQ). Disordered regions lie at residues 195 to 236 (RRRR…STEE), 263 to 320 (GGRT…RRNA), and 336 to 362 (RRRPDEALRRRRRVPRAAGGERPFSDP). The segment covering 263 to 280 (GGRTQDTASPAPAAAAAS) has biased composition (low complexity). Residues 302–316 (AGAHAARRHAARQGG) are compositionally biased toward basic residues.

Binds double-stranded RNA. This Oryza sativa subsp. japonica (Rice) protein is Double-stranded RNA-binding protein 5 (DRB5).